A 347-amino-acid polypeptide reads, in one-letter code: Putative [LysW]-L-2-aminoadipate/[LysW]-L-glutamate phosphate reductase (347 aa).

Residue 9–12 (SGYI) participates in NADP(+) binding. Residue C149 is part of the active site. N314 serves as a coordination point for NADP(+).

It belongs to the NAGSA dehydrogenase family. Type 1 subfamily. LysY sub-subfamily.

It is found in the cytoplasm. It catalyses the reaction [amino-group carrier protein]-C-terminal-N-(1-carboxy-5-oxopentan-1-yl)-L-glutamine + phosphate + NADP(+) = [amino-group carrier protein]-C-terminal-N-(1-carboxy-5-phosphooxy-5-oxopentan-1-yl)-L-glutamine + NADPH + H(+). It carries out the reaction [amino-group carrier protein]-C-terminal-gamma-(L-glutamyl-5-semialdehyde)-L-glutamate + phosphate + NADP(+) = [amino-group carrier protein]-C-terminal-gamma-(5-phospho-L-glutamyl)-L-glutamate + NADPH + H(+). It participates in amino-acid biosynthesis; L-lysine biosynthesis via AAA pathway; L-lysine from L-alpha-aminoadipate (Thermus route): step 3/5. It functions in the pathway amino-acid biosynthesis; L-arginine biosynthesis. Functionally, involved in both the arginine and lysine biosynthetic pathways. The protein is Putative [LysW]-L-2-aminoadipate/[LysW]-L-glutamate phosphate reductase of Picrophilus torridus (strain ATCC 700027 / DSM 9790 / JCM 10055 / NBRC 100828 / KAW 2/3).